The sequence spans 283 residues: uncharacterized protein (283 aa).

The region spanning 172–270 is the HTH araC/xylS-type domain; the sequence is EAIRDYIDER…ERSPSEYRRQ (99 aa). 2 DNA-binding regions (H-T-H motif) span residues 189 to 210 and 237 to 260; these read ESVAQAFYISPNYLSHLFQKTG and VKEVAHACGFVDSNYFCRLFRKNT.

This is an uncharacterized protein from Escherichia coli (strain K12).